A 233-amino-acid polypeptide reads, in one-letter code: Thrombin-like enzyme elegaxobin-1 (233 aa).

Residues 1-224 enclose the Peptidase S1 domain; sequence VIGGDECNIN…HLDWIKGIIA (224 aa). 6 disulfides stabilise this stretch: Cys7/Cys138, Cys25/Cys41, Cys73/Cys231, Cys117/Cys185, Cys149/Cys164, and Cys175/Cys200. Active-site charge relay system residues include His40 and Asp85. Ser179 (charge relay system) is an active-site residue.

The protein belongs to the peptidase S1 family. Snake venom subfamily. Monomer. In terms of tissue distribution, expressed by the venom gland.

Its subcellular location is the secreted. Thrombin-like snake venom serine protease that clots rabbit fibrinogen. Only the beta chain of fibrinogen (FGB) is cleaved, releasing fibrinopeptide B. Incubation with human fibrinogen alpha and beta resulted in cleavage of both fibrinogen chains but generated neither fibrinopeptide A nor fibrinopeptide B. Promotes clotting of rabbit fibrinogen, but not bovine or human fibrinogen. In Protobothrops elegans (Elegant pitviper), this protein is Thrombin-like enzyme elegaxobin-1.